Consider the following 315-residue polypeptide: Methionyl-tRNA formyltransferase (315 aa).

(6S)-5,6,7,8-tetrahydrofolate is bound at residue 113–116; the sequence is SLLP.

The protein belongs to the Fmt family.

The catalysed reaction is L-methionyl-tRNA(fMet) + (6R)-10-formyltetrahydrofolate = N-formyl-L-methionyl-tRNA(fMet) + (6S)-5,6,7,8-tetrahydrofolate + H(+). Its function is as follows. Attaches a formyl group to the free amino group of methionyl-tRNA(fMet). The formyl group appears to play a dual role in the initiator identity of N-formylmethionyl-tRNA by promoting its recognition by IF2 and preventing the misappropriation of this tRNA by the elongation apparatus. The protein is Methionyl-tRNA formyltransferase of Pectobacterium atrosepticum (strain SCRI 1043 / ATCC BAA-672) (Erwinia carotovora subsp. atroseptica).